The following is a 48-amino-acid chain: ATP synthase protein 8 (48 aa).

Residues 12 to 32 (LLTFGMLAISMLLYLVSTIIL) traverse the membrane as a helical segment.

It belongs to the ATPase protein 8 family. As to quaternary structure, F-type ATPases have 2 components, CF(1) - the catalytic core - and CF(0) - the membrane proton channel.

Its subcellular location is the mitochondrion membrane. Its function is as follows. Mitochondrial membrane ATP synthase (F(1)F(0) ATP synthase or Complex V) produces ATP from ADP in the presence of a proton gradient across the membrane which is generated by electron transport complexes of the respiratory chain. F-type ATPases consist of two structural domains, F(1) - containing the extramembraneous catalytic core and F(0) - containing the membrane proton channel, linked together by a central stalk and a peripheral stalk. During catalysis, ATP synthesis in the catalytic domain of F(1) is coupled via a rotary mechanism of the central stalk subunits to proton translocation. Part of the complex F(0) domain. Minor subunit located with subunit a in the membrane. This is ATP synthase protein 8 (ATP8) from Debaryomyces hansenii (strain ATCC 36239 / CBS 767 / BCRC 21394 / JCM 1990 / NBRC 0083 / IGC 2968) (Yeast).